Here is an 830-residue protein sequence, read N- to C-terminus: Probable mixed-linked glucan synthase 7 (830 aa).

2 helical membrane-spanning segments follow: residues 61-81 (LTIFVRIAIFVLFFKWRITYA) and 98-118 (AATFWTASIAGELWFAFMWVL). D186 is an active-site residue. Positions 251–279 (ELVRDRRRVRREYEEMRLRIDALQAADAR) form a coiled coil. Substrate is bound by residues D367 and D369. D529 is an active-site residue. Transmembrane regions (helical) follow at residues 613 to 633 (LFLMAYCLFPAIPLIAGGGGW), 638 to 658 (TPTYVAFLAALMVTLAAVAVL), 676 to 696 (FWMVSATSAYLAAVAQVALKV), 735 to 755 (ALMAPTAAALAVNVASMAAAG), 776 to 796 (LPVAFNVWVVVHLYPFALGLM), and 805 to 825 (PILFLFAVVAYLAVRFLCLLL).

It belongs to the glycosyltransferase 2 family. Plant cellulose synthase-like F subfamily. In terms of tissue distribution, expressed in mature pollen.

It is found in the golgi apparatus membrane. Functionally, may catalyze both beta-1,3 and beta-1,4 glycosidic linkage on beta-D-glucan. Essential for (1,3;1,4)-beta-D-glucans synthesis in grasses and cereals (Poaceae). The mixed-linked glucans (which are not present in walls of dicotyledons or most other monocotyledonous plants) are particularly important constituents of the walls of the starchy endosperm and aleurone cells of cereal grains such as oats, wheat, rice and barley. They can account for up to 70% by weight of the wall. The sequence is that of Probable mixed-linked glucan synthase 7 (CSLF7) from Oryza sativa subsp. japonica (Rice).